The sequence spans 401 residues: Probable plasmid-partitioning protein ParB (401 aa).

Residues K232–E272 form a disordered region.

Belongs to the ParB family.

The sequence is that of Probable plasmid-partitioning protein ParB from Xylella fastidiosa (strain 9a5c).